The following is a 284-amino-acid chain: Adenylate kinase 1, chloroplastic (284 aa).

Residues 1 to 36 (MARLVRVARSSSLFGFGNRFYSTSAEASHASSPSPF) constitute a chloroplast transit peptide. Residue 61 to 66 (GVGKGT) coordinates ATP. Residues 81–110 (ATGDLVREELASSGPLSQKLSEIVNQGKLV) are NMP. AMP is bound by residues Thr-82, Arg-87, 108 to 110 (KLV), 138 to 141 (GFPR), and Gln-145. The segment at 174–222 (GRRTCSQCGKGFNVAHINLKGENGRPGISMDPLLPPHQCMSKLVTRADD) is LID. Arg-175 is a binding site for ATP. Arg-219 and Arg-230 together coordinate AMP. Residue Gly-258 coordinates ATP.

The protein belongs to the adenylate kinase family. As to quaternary structure, monomer. Highly expressed in flowers and at lower levels in roots, leaves and stems.

The protein localises to the plastid. Its subcellular location is the chloroplast stroma. The catalysed reaction is AMP + ATP = 2 ADP. Catalyzes the reversible transfer of the terminal phosphate group between ATP and AMP. Plays an important role in cellular energy homeostasis, adenine nucleotide metabolism and plant growth. The polypeptide is Adenylate kinase 1, chloroplastic (ADK) (Arabidopsis thaliana (Mouse-ear cress)).